Consider the following 547-residue polypeptide: Chaperonin GroEL (547 aa).

ATP-binding positions include 30–33, lysine 51, 87–91, glycine 415, and aspartate 496; these read TLGP and DGTTT. Residues 528-547 form a disordered region; that stretch reads KGGGAPAGGGMPGGMGDMDF.

The protein belongs to the chaperonin (HSP60) family. As to quaternary structure, forms a cylinder of 14 subunits composed of two heptameric rings stacked back-to-back. Interacts with the co-chaperonin GroES.

It is found in the cytoplasm. It catalyses the reaction ATP + H2O + a folded polypeptide = ADP + phosphate + an unfolded polypeptide.. In terms of biological role, together with its co-chaperonin GroES, plays an essential role in assisting protein folding. The GroEL-GroES system forms a nano-cage that allows encapsulation of the non-native substrate proteins and provides a physical environment optimized to promote and accelerate protein folding. This Caulobacter vibrioides (strain ATCC 19089 / CIP 103742 / CB 15) (Caulobacter crescentus) protein is Chaperonin GroEL.